The sequence spans 360 residues: Dual-specificity RNA methyltransferase RlmN (360 aa).

Catalysis depends on E89, which acts as the Proton acceptor. The Radical SAM core domain maps to 95–330; sequence DSGRGTLCVS…TRVTRGQDID (236 aa). Cysteines 102 and 333 form a disulfide. [4Fe-4S] cluster-binding residues include C109, C113, and C116. Residues 159–160, S191, 213–215, and N290 each bind S-adenosyl-L-methionine; these read GE and SLH. Catalysis depends on C333, which acts as the S-methylcysteine intermediate.

It belongs to the radical SAM superfamily. RlmN family. [4Fe-4S] cluster is required as a cofactor.

The protein localises to the cytoplasm. It carries out the reaction adenosine(2503) in 23S rRNA + 2 reduced [2Fe-2S]-[ferredoxin] + 2 S-adenosyl-L-methionine = 2-methyladenosine(2503) in 23S rRNA + 5'-deoxyadenosine + L-methionine + 2 oxidized [2Fe-2S]-[ferredoxin] + S-adenosyl-L-homocysteine. The enzyme catalyses adenosine(37) in tRNA + 2 reduced [2Fe-2S]-[ferredoxin] + 2 S-adenosyl-L-methionine = 2-methyladenosine(37) in tRNA + 5'-deoxyadenosine + L-methionine + 2 oxidized [2Fe-2S]-[ferredoxin] + S-adenosyl-L-homocysteine. In terms of biological role, specifically methylates position 2 of adenine 2503 in 23S rRNA and position 2 of adenine 37 in tRNAs. m2A2503 modification seems to play a crucial role in the proofreading step occurring at the peptidyl transferase center and thus would serve to optimize ribosomal fidelity. This is Dual-specificity RNA methyltransferase RlmN from Alkalilimnicola ehrlichii (strain ATCC BAA-1101 / DSM 17681 / MLHE-1).